A 423-amino-acid chain; its full sequence is Serine--tRNA ligase 1 (423 aa).

231–233 (TAE) is an L-serine binding site. 262–264 (RSE) is an ATP binding site. Glu285 provides a ligand contact to L-serine. ATP is bound at residue 349–352 (EISS). Ser384 contributes to the L-serine binding site.

Belongs to the class-II aminoacyl-tRNA synthetase family. Type-1 seryl-tRNA synthetase subfamily. Homodimer. The tRNA molecule binds across the dimer.

It localises to the cytoplasm. The enzyme catalyses tRNA(Ser) + L-serine + ATP = L-seryl-tRNA(Ser) + AMP + diphosphate + H(+). It carries out the reaction tRNA(Sec) + L-serine + ATP = L-seryl-tRNA(Sec) + AMP + diphosphate + H(+). It functions in the pathway aminoacyl-tRNA biosynthesis; selenocysteinyl-tRNA(Sec) biosynthesis; L-seryl-tRNA(Sec) from L-serine and tRNA(Sec): step 1/1. Its function is as follows. Catalyzes the attachment of serine to tRNA(Ser). Is also able to aminoacylate tRNA(Sec) with serine, to form the misacylated tRNA L-seryl-tRNA(Sec), which will be further converted into selenocysteinyl-tRNA(Sec). The polypeptide is Serine--tRNA ligase 1 (Enterococcus faecalis (strain ATCC 700802 / V583)).